A 106-amino-acid polypeptide reads, in one-letter code: Large ribosomal subunit protein uL24 (106 aa).

Belongs to the universal ribosomal protein uL24 family. As to quaternary structure, part of the 50S ribosomal subunit.

Functionally, one of two assembly initiator proteins, it binds directly to the 5'-end of the 23S rRNA, where it nucleates assembly of the 50S subunit. Its function is as follows. One of the proteins that surrounds the polypeptide exit tunnel on the outside of the subunit. In Orientia tsutsugamushi (strain Boryong) (Rickettsia tsutsugamushi), this protein is Large ribosomal subunit protein uL24.